The primary structure comprises 315 residues: Nucleotide-binding protein CGSHiEE_06315 (315 aa).

8–15 (GRSGAGKS) serves as a coordination point for ATP. A GTP-binding site is contributed by 56-59 (DIRN).

The protein belongs to the RapZ-like family.

Functionally, displays ATPase and GTPase activities. The protein is Nucleotide-binding protein CGSHiEE_06315 of Haemophilus influenzae (strain PittEE).